A 260-amino-acid chain; its full sequence is Aliphatic sulfonates import ATP-binding protein SsuB 1 (260 aa).

One can recognise an ABC transporter domain in the interval 29–243 (VRVDGLTRSF…DITDPRFAEL (215 aa)). Residue 61-68 (GRSGCGKS) participates in ATP binding.

This sequence belongs to the ABC transporter superfamily. Aliphatic sulfonates importer (TC 3.A.1.17.2) family. In terms of assembly, the complex is composed of two ATP-binding proteins (SsuB), two transmembrane proteins (SsuC) and a solute-binding protein (SsuA).

Its subcellular location is the cell membrane. It catalyses the reaction ATP + H2O + aliphatic sulfonate-[sulfonate-binding protein]Side 1 = ADP + phosphate + aliphatic sulfonateSide 2 + [sulfonate-binding protein]Side 1.. Its function is as follows. Part of the ABC transporter complex SsuABC involved in aliphatic sulfonates import. Responsible for energy coupling to the transport system. The chain is Aliphatic sulfonates import ATP-binding protein SsuB 1 from Streptomyces avermitilis (strain ATCC 31267 / DSM 46492 / JCM 5070 / NBRC 14893 / NCIMB 12804 / NRRL 8165 / MA-4680).